The following is a 329-amino-acid chain: Ribosomal RNA small subunit methyltransferase C (329 aa).

This sequence belongs to the methyltransferase superfamily. RsmC family. Monomer.

The protein resides in the cytoplasm. The enzyme catalyses guanosine(1207) in 16S rRNA + S-adenosyl-L-methionine = N(2)-methylguanosine(1207) in 16S rRNA + S-adenosyl-L-homocysteine + H(+). Functionally, specifically methylates the guanine in position 1207 of 16S rRNA in the 30S particle. The polypeptide is Ribosomal RNA small subunit methyltransferase C (Actinobacillus pleuropneumoniae serotype 3 (strain JL03)).